Consider the following 194-residue polypeptide: Ribonuclease HII (194 aa).

The 191-residue stretch at 3-193 folds into the RNase H type-2 domain; it reads ILTAGVDEAG…VRNLLAQQAL (191 aa). 3 residues coordinate a divalent metal cation: Asp-9, Glu-10, and Asp-101.

Belongs to the RNase HII family. It depends on Mn(2+) as a cofactor. Mg(2+) serves as cofactor.

Its subcellular location is the cytoplasm. The catalysed reaction is Endonucleolytic cleavage to 5'-phosphomonoester.. Endonuclease that specifically degrades the RNA of RNA-DNA hybrids. The polypeptide is Ribonuclease HII (Neisseria gonorrhoeae (strain ATCC 700825 / FA 1090)).